We begin with the raw amino-acid sequence, 264 residues long: ATP synthase subunit a (264 aa).

A run of 5 helical transmembrane segments spans residues 39–59 (LDTLIISVVLGALFILIFYII), 97–117 (VAPLALTIFIWVFLMNFMDLV), 139–159 (TADPTLTFAMSITVFVLVVFY), 205–225 (LFGNLFAGELIFILIALLPWW), and 239–259 (LLVITVQAFIFMMLTVVYISL).

The protein belongs to the ATPase A chain family. In terms of assembly, F-type ATPases have 2 components, CF(1) - the catalytic core - and CF(0) - the membrane proton channel. CF(1) has five subunits: alpha(3), beta(3), gamma(1), delta(1), epsilon(1). CF(0) has three main subunits: a(1), b(2) and c(9-12). The alpha and beta chains form an alternating ring which encloses part of the gamma chain. CF(1) is attached to CF(0) by a central stalk formed by the gamma and epsilon chains, while a peripheral stalk is formed by the delta and b chains.

It localises to the cell inner membrane. In terms of biological role, key component of the proton channel; it plays a direct role in the translocation of protons across the membrane. The chain is ATP synthase subunit a from Coxiella burnetii (strain CbuG_Q212) (Coxiella burnetii (strain Q212)).